The primary structure comprises 367 residues: Anhydro-N-acetylmuramic acid kinase (367 aa).

11 to 18 (GTSLDGVD) serves as a coordination point for ATP.

This sequence belongs to the anhydro-N-acetylmuramic acid kinase family.

It carries out the reaction 1,6-anhydro-N-acetyl-beta-muramate + ATP + H2O = N-acetyl-D-muramate 6-phosphate + ADP + H(+). The protein operates within amino-sugar metabolism; 1,6-anhydro-N-acetylmuramate degradation. It participates in cell wall biogenesis; peptidoglycan recycling. Functionally, catalyzes the specific phosphorylation of 1,6-anhydro-N-acetylmuramic acid (anhMurNAc) with the simultaneous cleavage of the 1,6-anhydro ring, generating MurNAc-6-P. Is required for the utilization of anhMurNAc either imported from the medium or derived from its own cell wall murein, and thus plays a role in cell wall recycling. This Rhodopseudomonas palustris (strain ATCC BAA-98 / CGA009) protein is Anhydro-N-acetylmuramic acid kinase.